A 202-amino-acid chain; its full sequence is Large ribosomal subunit protein bL25 (202 aa).

This sequence belongs to the bacterial ribosomal protein bL25 family. CTC subfamily. As to quaternary structure, part of the 50S ribosomal subunit; part of the 5S rRNA/L5/L18/L25 subcomplex. Contacts the 5S rRNA. Binds to the 5S rRNA independently of L5 and L18.

Functionally, this is one of the proteins that binds to the 5S RNA in the ribosome where it forms part of the central protuberance. This is Large ribosomal subunit protein bL25 from Chlorobium luteolum (strain DSM 273 / BCRC 81028 / 2530) (Pelodictyon luteolum).